Reading from the N-terminus, the 88-residue chain is Large ribosomal subunit protein bL31B (88 aa).

The protein belongs to the bacterial ribosomal protein bL31 family. Type B subfamily. Part of the 50S ribosomal subunit.

This Nocardia farcinica (strain IFM 10152) protein is Large ribosomal subunit protein bL31B.